The sequence spans 218 residues: Protein N-lysine methyltransferase METTL21A (218 aa).

Residues Trp47, 73-75 (GAG), Asp94, Trp125, and Ala143 each bind S-adenosyl-L-methionine.

This sequence belongs to the methyltransferase superfamily. METTL21 family. As to quaternary structure, interacts with heat shock protein 70 family members; at least some of these proteins are methylation substrates.

It is found in the cytoplasm. It carries out the reaction L-lysyl-[protein] + 3 S-adenosyl-L-methionine = N(6),N(6),N(6)-trimethyl-L-lysyl-[protein] + 3 S-adenosyl-L-homocysteine + 3 H(+). Protein-lysine methyltransferase that selectively trimethylates residues in heat shock protein 70 (HSP70) family members. Contributes to the in vivo trimethylation of Lys residues in HSPA1 and HSPA8. In vitro methylates 'Lys-561' in HSPA1, 'Lys-564' in HSPA2, 'Lys-585' in HSPA5, 'Lys-563' in HSPA6 and 'Lys-561' in HSPA8. The chain is Protein N-lysine methyltransferase METTL21A (METTL21A) from Homo sapiens (Human).